A 578-amino-acid chain; its full sequence is GRAM domain-containing protein 4 (578 aa).

2 disordered regions span residues 23 to 58 (ESPN…AGPG) and 136 to 159 (TEEQ…ERRS). Phosphoserine is present on residues serine 24 and serine 28. Residues 44-53 (SPRDSEELRD) show a composition bias toward basic and acidic residues. Residues 83–143 (HLEIALLEKH…ARTEEQMAQQ (61 aa)) adopt a coiled-coil conformation. 3 helical membrane passes run 240–260 (VYMN…LAIL), 334–354 (ITQK…FFPY), and 356–376 (LVGL…DFIF). The segment at 415-435 (QTTSSRSYVPSAPAGLGKEED) is disordered. A GRAM domain is found at 445-523 (GNFHEIFNLT…VDITDIQKYK (79 aa)).

In terms of assembly, interacts with RTN4 (isoform B). As to expression, expressed in lung and in primary lung squamous cell carcinoma (LSCC).

Its subcellular location is the mitochondrion membrane. It is found in the endoplasmic reticulum membrane. Its function is as follows. Plays a role as a mediator of E2F1-induced apoptosis in the absence of p53/TP53. Plays a role as a mediator of E2F1-induced apoptosis in the absence of p53/TP53. Inhibits TLR9 response to nucelic acids and regulates TLR9-mediated innate immune response. This is GRAM domain-containing protein 4 from Homo sapiens (Human).